We begin with the raw amino-acid sequence, 205 residues long: Molybdopterin synthase catalytic subunit (205 aa).

Residues 1–36 (MQHPTLQPEVDPNPVVSSSSSSSSSNPLPAHLNPAN) form a disordered region. Residues 146 to 147 (HR), Lys162, and 169 to 171 (KRE) contribute to the substrate site. The disordered stretch occupies residues 179–205 (GEGEGEWRANRDTDSQGNCRGDKVAEG). The span at 183 to 205 (GEWRANRDTDSQGNCRGDKVAEG) shows a compositional bias: basic and acidic residues.

Belongs to the MoaE family. MOCS2B subfamily. Heterotetramer; composed of 2 small (MOCS2A) and 2 large (MOCS2B) subunits.

It localises to the cytoplasm. The catalysed reaction is 2 [molybdopterin-synthase sulfur-carrier protein]-C-terminal-Gly-aminoethanethioate + cyclic pyranopterin phosphate + H2O = molybdopterin + 2 [molybdopterin-synthase sulfur-carrier protein]-C-terminal Gly-Gly + 2 H(+). It functions in the pathway cofactor biosynthesis; molybdopterin biosynthesis. Catalytic subunit of the molybdopterin synthase complex, a complex that catalyzes the conversion of precursor Z into molybdopterin. Acts by mediating the incorporation of 2 sulfur atoms from thiocarboxylated MOCS2A into precursor Z to generate a dithiolene group. The chain is Molybdopterin synthase catalytic subunit from Ajellomyces capsulatus (strain NAm1 / WU24) (Darling's disease fungus).